We begin with the raw amino-acid sequence, 222 residues long: Coiled-coil domain-containing protein 43 (222 aa).

Lys-93 is covalently cross-linked (Glycyl lysine isopeptide (Lys-Gly) (interchain with G-Cter in SUMO1)). Positions 119–143 form a coiled coil; that stretch reads SEEEKQRKAALLAQYADVTDEEDEA. Positions 136–222 are disordered; that stretch reads VTDEEDEADK…KRTQKGERKR (87 aa). Residue Thr-137 is modified to Phosphothreonine. Positions 152–168 are enriched in polar residues; it reads STANVSSDRTLFRNTNV. Over residues 172–209 the composition is skewed to basic and acidic residues; sequence LNARKLERDSLRDESQRKKEQDKLQREKDKLAKQERKE. The stretch at 175 to 217 forms a coiled coil; that stretch reads RKLERDSLRDESQRKKEQDKLQREKDKLAKQERKEKEKKRTQK. Residues 210 to 222 show a composition bias toward basic residues; sequence KEKKRTQKGERKR.

It belongs to the CCDC43 family.

The protein is Coiled-coil domain-containing protein 43 (Ccdc43) of Mus musculus (Mouse).